The sequence spans 357 residues: Dual-specificity RNA methyltransferase RlmN (357 aa).

Glutamate 89 functions as the Proton acceptor in the catalytic mechanism. The region spanning 109-340 (EGEKYTVCVS…CTIRESKALD (232 aa)) is the Radical SAM core domain. Cysteine 116 and cysteine 345 are joined by a disulfide. Positions 123, 127, and 130 each coordinate [4Fe-4S] cluster. Residues 173–174 (GE), serine 203, 226–228 (SLH), and asparagine 302 each bind S-adenosyl-L-methionine. The active-site S-methylcysteine intermediate is the cysteine 345.

It belongs to the radical SAM superfamily. RlmN family. [4Fe-4S] cluster serves as cofactor.

It localises to the cytoplasm. The enzyme catalyses adenosine(2503) in 23S rRNA + 2 reduced [2Fe-2S]-[ferredoxin] + 2 S-adenosyl-L-methionine = 2-methyladenosine(2503) in 23S rRNA + 5'-deoxyadenosine + L-methionine + 2 oxidized [2Fe-2S]-[ferredoxin] + S-adenosyl-L-homocysteine. The catalysed reaction is adenosine(37) in tRNA + 2 reduced [2Fe-2S]-[ferredoxin] + 2 S-adenosyl-L-methionine = 2-methyladenosine(37) in tRNA + 5'-deoxyadenosine + L-methionine + 2 oxidized [2Fe-2S]-[ferredoxin] + S-adenosyl-L-homocysteine. Specifically methylates position 2 of adenine 2503 in 23S rRNA and position 2 of adenine 37 in tRNAs. m2A2503 modification seems to play a crucial role in the proofreading step occurring at the peptidyl transferase center and thus would serve to optimize ribosomal fidelity. This chain is Dual-specificity RNA methyltransferase RlmN, found in Helicobacter pylori (strain J99 / ATCC 700824) (Campylobacter pylori J99).